A 147-amino-acid chain; its full sequence is Hemoglobin subunit delta (147 aa).

The Globin domain occupies 3 to 147; the sequence is NLTAAEKTQV…VANALAHKYH (145 aa). Residues His-64 and His-93 each coordinate heme b.

The protein belongs to the globin family. In terms of assembly, heterotetramer of two delta chains and two alpha chains. In terms of tissue distribution, red blood cells.

In Loxodonta africana (African elephant), this protein is Hemoglobin subunit delta (HBD).